The sequence spans 502 residues: Probable malate:quinone oxidoreductase (502 aa).

The protein belongs to the MQO family. The cofactor is FAD.

It catalyses the reaction (S)-malate + a quinone = a quinol + oxaloacetate. It functions in the pathway carbohydrate metabolism; tricarboxylic acid cycle; oxaloacetate from (S)-malate (quinone route): step 1/1. The sequence is that of Probable malate:quinone oxidoreductase from Oceanobacillus iheyensis (strain DSM 14371 / CIP 107618 / JCM 11309 / KCTC 3954 / HTE831).